The following is a 239-amino-acid chain: UDP-2,3-diacylglucosamine hydrolase (239 aa).

Residues Asp-8, His-10, Asp-41, Asn-78, and His-113 each coordinate Mn(2+). Substrate is bound at residue 78-79 (NR). Residues Asp-121, Ser-159, Asn-163, Lys-166, and His-194 each coordinate substrate. Residues His-194 and His-196 each coordinate Mn(2+).

Belongs to the LpxH family. The cofactor is Mn(2+).

The protein resides in the cell inner membrane. It carries out the reaction UDP-2-N,3-O-bis[(3R)-3-hydroxytetradecanoyl]-alpha-D-glucosamine + H2O = 2-N,3-O-bis[(3R)-3-hydroxytetradecanoyl]-alpha-D-glucosaminyl 1-phosphate + UMP + 2 H(+). Its pathway is glycolipid biosynthesis; lipid IV(A) biosynthesis; lipid IV(A) from (3R)-3-hydroxytetradecanoyl-[acyl-carrier-protein] and UDP-N-acetyl-alpha-D-glucosamine: step 4/6. Hydrolyzes the pyrophosphate bond of UDP-2,3-diacylglucosamine to yield 2,3-diacylglucosamine 1-phosphate (lipid X) and UMP by catalyzing the attack of water at the alpha-P atom. Involved in the biosynthesis of lipid A, a phosphorylated glycolipid that anchors the lipopolysaccharide to the outer membrane of the cell. The protein is UDP-2,3-diacylglucosamine hydrolase of Shewanella sp. (strain MR-7).